The primary structure comprises 396 residues: L-lactate dehydrogenase (396 aa).

The FMN hydroxy acid dehydrogenase domain maps to 1–380 (MIISAASDYR…SGDSLVQELG (380 aa)). Tyr-24 lines the substrate pocket. FMN-binding residues include Ser-106 and Gln-127. Tyr-129 lines the substrate pocket. Thr-155 is an FMN binding site. Arg-164 is a binding site for substrate. Lys-251 is a binding site for FMN. His-275 acts as the Proton acceptor in catalysis. Arg-278 provides a ligand contact to substrate. 306 to 330 (DSGIRNGLDVVRMIALGADTVLLGR) lines the FMN pocket.

It belongs to the FMN-dependent alpha-hydroxy acid dehydrogenase family. It depends on FMN as a cofactor.

It is found in the cell inner membrane. It carries out the reaction (S)-lactate + A = pyruvate + AH2. Its function is as follows. Catalyzes the conversion of L-lactate to pyruvate. Is coupled to the respiratory chain. The protein is L-lactate dehydrogenase of Salmonella paratyphi B (strain ATCC BAA-1250 / SPB7).